The following is a 143-amino-acid chain: Flagellar assembly factor FliW (143 aa).

This sequence belongs to the FliW family. As to quaternary structure, interacts with translational regulator CsrA and flagellin(s).

Its subcellular location is the cytoplasm. Functionally, acts as an anti-CsrA protein, binds CsrA and prevents it from repressing translation of its target genes, one of which is flagellin. Binds to flagellin and participates in the assembly of the flagellum. The sequence is that of Flagellar assembly factor FliW from Clostridium botulinum (strain Okra / Type B1).